A 22-amino-acid polypeptide reads, in one-letter code: Rothein 4.1 (22 aa).

Belongs to the frog skin active peptide (FSAP) family. Rothein subfamily. As to expression, expressed by the skin dorsal glands.

It is found in the secreted. Its function is as follows. Lacks antimicrobial activity. Does not inhibit the formation of NO by neuronal nitric oxide. This chain is Rothein 4.1, found in Litoria rothii (Roth's tree frog).